The sequence spans 164 residues: Ubiquitin-fold modifier-conjugating enzyme 1 (164 aa).

Cys-116 acts as the Glycyl thioester intermediate in catalysis.

Belongs to the ubiquitin-conjugating enzyme family. UFC1 subfamily.

Functionally, E2-like enzyme which forms an intermediate with UFM1 via a thioester linkage. This chain is Ubiquitin-fold modifier-conjugating enzyme 1, found in Drosophila ananassae (Fruit fly).